A 425-amino-acid polypeptide reads, in one-letter code: Terminal nucleotidyltransferase 5B (425 aa).

The interval 1 to 42 is disordered; that stretch reads MMPSESGAERRDRAAAQVGTAAATAVATAAPAGGGPDPEALS. Low complexity predominate over residues 15–31; it reads AAQVGTAAATAVATAAP.

Belongs to the TENT family.

It is found in the cytoplasm. The protein resides in the nucleus. It carries out the reaction RNA(n) + ATP = RNA(n)-3'-adenine ribonucleotide + diphosphate. Its function is as follows. Catalyzes the transfer of one adenosine molecule from an ATP to an mRNA poly(A) tail bearing a 3'-OH terminal group in an ATP hydrolysis-dependent manner. May be involved in maintaining the translation efficiency of at least some genes through preventing degradation of their mRNAs. Prefers RNA molecules that are adenosine-rich close to 3'-end. In addition, may inhibit cell proliferation and cell cycle progression through ubiquitination of beta-catenin/CTNNB1. This chain is Terminal nucleotidyltransferase 5B, found in Homo sapiens (Human).